Reading from the N-terminus, the 281-residue chain is MILSLLSMNINYNSITSIKQTLKERKIAPRKLWGQNYLINESIRQKIIESLDIKENEKIWEIGPGLGAMTEILLKKTNLLTAFEIDLKYSEILNEKFGKLKNFKLIKGDFLKKYKNENQNIDKIFSNLPYNIASKVISKLIEENFLKEMVFTVQKELADRITAKINSKNYSSFTVLVQSHFKVIKILDIGENNFYPAPKVKSTTLKLIPKKNNIKNFKEFNKLVRTVFSNRRKKLKNTIINFITNKATLRENFLKEYLDKRPENISVEEFIQISNTLNAYH.

Residues asparagine 36, leucine 38, glycine 63, glutamate 84, aspartate 109, and asparagine 127 each contribute to the S-adenosyl-L-methionine site.

Belongs to the class I-like SAM-binding methyltransferase superfamily. rRNA adenine N(6)-methyltransferase family. RsmA subfamily.

The protein resides in the cytoplasm. The catalysed reaction is adenosine(1518)/adenosine(1519) in 16S rRNA + 4 S-adenosyl-L-methionine = N(6)-dimethyladenosine(1518)/N(6)-dimethyladenosine(1519) in 16S rRNA + 4 S-adenosyl-L-homocysteine + 4 H(+). Its function is as follows. Specifically dimethylates two adjacent adenosines (A1518 and A1519) in the loop of a conserved hairpin near the 3'-end of 16S rRNA in the 30S particle. May play a critical role in biogenesis of 30S subunits. This chain is Ribosomal RNA small subunit methyltransferase A, found in Borreliella burgdorferi (strain ATCC 35210 / DSM 4680 / CIP 102532 / B31) (Borrelia burgdorferi).